Reading from the N-terminus, the 141-residue chain is HTH-type transcriptional repressor NsrR (141 aa).

Positions glutamine 2–glutamate 129 constitute an HTH rrf2-type domain. A DNA-binding region (H-T-H motif) is located at residues isoleucine 28–arginine 51. Residues cysteine 91, cysteine 96, and cysteine 102 each coordinate [2Fe-2S] cluster.

It depends on [2Fe-2S] cluster as a cofactor.

Nitric oxide-sensitive repressor of genes involved in protecting the cell against nitrosative stress. May require iron for activity. The chain is HTH-type transcriptional repressor NsrR from Klebsiella pneumoniae subsp. pneumoniae (strain ATCC 700721 / MGH 78578).